Consider the following 83-residue polypeptide: Cytochrome b559 subunit alpha (83 aa).

Residues 21–35 (IIHTITVPMLFLAGW) form a helical membrane-spanning segment. Histidine 23 contacts heme.

Belongs to the PsbE/PsbF family. In terms of assembly, heterodimer of an alpha subunit and a beta subunit. PSII is composed of 1 copy each of membrane proteins PsbA, PsbB, PsbC, PsbD, PsbE, PsbF, PsbH, PsbI, PsbJ, PsbK, PsbL, PsbM, PsbT, PsbX, PsbY, PsbZ, Psb30/Ycf12, peripheral proteins PsbO, CyanoQ (PsbQ), PsbU, PsbV and a large number of cofactors. It forms dimeric complexes. It depends on heme b as a cofactor.

Its subcellular location is the cellular thylakoid membrane. In terms of biological role, this b-type cytochrome is tightly associated with the reaction center of photosystem II (PSII). PSII is a light-driven water:plastoquinone oxidoreductase that uses light energy to abstract electrons from H(2)O, generating O(2) and a proton gradient subsequently used for ATP formation. It consists of a core antenna complex that captures photons, and an electron transfer chain that converts photonic excitation into a charge separation. The protein is Cytochrome b559 subunit alpha of Acaryochloris marina (strain MBIC 11017).